Consider the following 216-residue polypeptide: Pyrophosphatase PpaX (216 aa).

Catalysis depends on aspartate 9, which acts as the Nucleophile.

It belongs to the HAD-like hydrolase superfamily. PpaX family. Mg(2+) is required as a cofactor.

The enzyme catalyses diphosphate + H2O = 2 phosphate + H(+). Its function is as follows. Hydrolyzes pyrophosphate formed during P-Ser-HPr dephosphorylation by HPrK/P. Might play a role in controlling the intracellular pyrophosphate pool. The sequence is that of Pyrophosphatase PpaX from Bacillus thuringiensis (strain Al Hakam).